We begin with the raw amino-acid sequence, 198 residues long: Peroxynitrite isomerase (198 aa).

A GXWXGXG motif is present at residues Gly20–Gly26. Position 189 (His189) interacts with heme b.

Belongs to the nitrobindin family. In terms of assembly, homodimer. Heme b serves as cofactor.

It carries out the reaction peroxynitrite = nitrate. It functions in the pathway nitrogen metabolism. Functionally, heme-binding protein able to scavenge peroxynitrite and to protect free L-tyrosine against peroxynitrite-mediated nitration, by acting as a peroxynitrite isomerase that converts peroxynitrite to nitrate. Therefore, this protein likely plays a role in peroxynitrite sensing and in the detoxification of reactive nitrogen and oxygen species (RNS and ROS, respectively). Is able to bind nitric oxide (NO) in vitro, but may act as a sensor of peroxynitrite levels in vivo. The sequence is that of Peroxynitrite isomerase from Leifsonia xyli subsp. xyli (strain CTCB07).